Here is a 706-residue protein sequence, read N- to C-terminus: Dual specificity calcium/calmodulin-dependent 3',5'-cyclic nucleotide phosphodiesterase 1C (706 aa).

Methionine 1 bears the N-acetylmethionine mark. The interval 123-146 (EKPRFKSIVHAVQAGIFVERMYRR) is calmodulin-binding. One can recognise a PDEase domain in the interval 151–528 (VGLSYPPAVI…ERWRAKVPKE (378 aa)). The Proton donor role is filled by histidine 228. Residues histidine 232, histidine 268, aspartate 269, and aspartate 376 each contribute to the Zn(2+) site. A Mg(2+)-binding site is contributed by aspartate 269. 2 disordered regions span residues 453 to 497 (LIDE…INNS) and 524 to 655 (KVPK…IKPP). 2 stretches are compositionally biased toward polar residues: residues 456–476 (ESSQTGGTGQRRSSLNSINSS) and 483–497 (VKSSGSDGSAPINNS). 3 stretches are compositionally biased toward basic and acidic residues: residues 524–554 (KVPKEEKAKKEAEEKARLAAEEKQKEMEAKS), 580–597 (RKGDNPRGKNSKGEKAGE), and 603–630 (DLKDGKNKADKKDHSNTGNESKKTDGTK). Residues 638–647 (APSTSSTSRI) are compositionally biased toward polar residues.

Belongs to the cyclic nucleotide phosphodiesterase family. PDE1 subfamily. Homodimer. Zn(2+) is required as a cofactor. Requires Mg(2+) as cofactor. In terms of tissue distribution, highly expressed in testis and at moderate levels in heart. As to expression, expressed at a moderate level in brain, the cerebellum, testis, heart and olfactory epithelium. Highly expressed in olfactory epithelium and at very low levels, if any, in other tissues. In the cochlea, expressed in the inner and outer hair cells (at protein level). In the brain, highly expressed in the neurons of the granule layer of the cerebellum, some Purkinje cells, the central amygdaloid nucleus, and the interpolar spinal trigem nucleus and, at moderate levels, in the glomerular and external plexiform layer of the olfactory bulb as well as in parts of the caudate-putamen and olfactory tubercle.

The protein localises to the lysosome. It catalyses the reaction a nucleoside 3',5'-cyclic phosphate + H2O = a nucleoside 5'-phosphate + H(+). The catalysed reaction is 3',5'-cyclic GMP + H2O = GMP + H(+). It carries out the reaction 3',5'-cyclic AMP + H2O = AMP + H(+). Its activity is regulated as follows. Type I PDE are activated by the binding of calmodulin in the presence of Ca(2+). Different splice variants may have different sensitivities to Ca(2+). Exhibits a higher sensitivity to Ca(2+) stimulation than isoforms 1 and 2. Functionally, calmodulin-dependent cyclic nucleotide phosphodiesterase with a dual specificity for cAMP and cGMP, which are key regulators of many important physiological processes. Exhibits high affinity for both cAMP and cGMP. Modulates the amplitude and duration of the cAMP signal in sensory cilia in response to odorant stimulation, hence contributing to the generation of action potentials. Regulates smooth muscle cell proliferation. Regulates the stability of growth factor receptors, including PDGFRB. The protein is Dual specificity calcium/calmodulin-dependent 3',5'-cyclic nucleotide phosphodiesterase 1C of Mus musculus (Mouse).